Reading from the N-terminus, the 301-residue chain is N-carbamoylputrescine amidase (301 aa).

In terms of domain architecture, CN hydrolase spans 11–269 (VSVAAVQFAC…EDVLVAEFDL (259 aa)). Residue Glu-50 is the Proton acceptor of the active site. Lys-123 acts as the Proton donor in catalysis. Cys-160 functions as the Nucleophile in the catalytic mechanism.

This sequence belongs to the carbon-nitrogen hydrolase superfamily. In terms of assembly, homooctamer.

The catalysed reaction is N-carbamoylputrescine + H2O + 2 H(+) = putrescine + NH4(+) + CO2. Its pathway is amine and polyamine biosynthesis; putrescine biosynthesis via agmatine pathway; putrescine from N-carbamoylputrescine (amidase route): step 1/1. Involved in polyamine biosynthesis. In Oryza sativa subsp. japonica (Rice), this protein is N-carbamoylputrescine amidase (CPA).